A 61-amino-acid chain; its full sequence is Small ribosomal subunit protein uS14 (61 aa).

Positions 24, 27, 40, and 43 each coordinate Zn(2+).

Belongs to the universal ribosomal protein uS14 family. Zinc-binding uS14 subfamily. In terms of assembly, part of the 30S ribosomal subunit. Contacts proteins S3 and S10. Zn(2+) is required as a cofactor.

In terms of biological role, binds 16S rRNA, required for the assembly of 30S particles and may also be responsible for determining the conformation of the 16S rRNA at the A site. This Desulfovibrio desulfuricans (strain ATCC 27774 / DSM 6949 / MB) protein is Small ribosomal subunit protein uS14.